Reading from the N-terminus, the 177-residue chain is uncharacterized protein (177 aa).

This is an uncharacterized protein from Homo sapiens (Human).